Consider the following 285-residue polypeptide: Seed agglutinin 2 (285 aa).

Positions Met1 to Ser31 are cleaved as a signal peptide. N-linked (GlcNAc...) asparagine glycosylation is present at Asn147. Positions 156 and 158 each coordinate Mn(2+). 3 residues coordinate Ca(2+): Asp158, Asn162, and Asp166. Mn(2+)-binding residues include Asp166 and His171.

This sequence belongs to the leguminous lectin family. As to quaternary structure, homotetramer. Mostly found in non-glycosylated form. As to expression, expressed in seed.

In terms of biological role, seed lectin. This Robinia pseudoacacia (Black locust) protein is Seed agglutinin 2.